The primary structure comprises 361 residues: Phospho-N-acetylmuramoyl-pentapeptide-transferase (361 aa).

10 helical membrane-spanning segments follow: residues 25 to 45, 73 to 93, 97 to 117, 134 to 154, 168 to 188, 200 to 220, 237 to 257, 264 to 284, 289 to 309, and 338 to 358; these read RAVLAALTALTISFIVGPAVI, TMGGALILVSVAVTTLLWADL, YVWLALMTLLGFGVIGWVDDW, YFWQSAIGLVVAVYLWQTASL, ATFGLSAAAFIALTYFVIVGA, GLAILPTVMVASALAIFAYVA, AGELAIFCAAMAGAGLAFLWF, VFMGDVGALALGAALGVVAVV, IILFIMCGVFVMETLSVMIQV, and QVVVRFWIISMMLVLIGLSSL.

The protein belongs to the glycosyltransferase 4 family. MraY subfamily. The cofactor is Mg(2+).

Its subcellular location is the cell inner membrane. It catalyses the reaction UDP-N-acetyl-alpha-D-muramoyl-L-alanyl-gamma-D-glutamyl-meso-2,6-diaminopimeloyl-D-alanyl-D-alanine + di-trans,octa-cis-undecaprenyl phosphate = di-trans,octa-cis-undecaprenyl diphospho-N-acetyl-alpha-D-muramoyl-L-alanyl-D-glutamyl-meso-2,6-diaminopimeloyl-D-alanyl-D-alanine + UMP. It functions in the pathway cell wall biogenesis; peptidoglycan biosynthesis. Catalyzes the initial step of the lipid cycle reactions in the biosynthesis of the cell wall peptidoglycan: transfers peptidoglycan precursor phospho-MurNAc-pentapeptide from UDP-MurNAc-pentapeptide onto the lipid carrier undecaprenyl phosphate, yielding undecaprenyl-pyrophosphoryl-MurNAc-pentapeptide, known as lipid I. The sequence is that of Phospho-N-acetylmuramoyl-pentapeptide-transferase from Thiobacillus denitrificans (strain ATCC 25259 / T1).